The sequence spans 201 residues: Orotate phosphoribosyltransferase (201 aa).

113-121 (EDIITTGKS) contributes to the 5-phospho-alpha-D-ribose 1-diphosphate binding site. Positions 117 and 145 each coordinate orotate.

Belongs to the purine/pyrimidine phosphoribosyltransferase family. PyrE subfamily. In terms of assembly, homodimer. Mg(2+) serves as cofactor.

It catalyses the reaction orotidine 5'-phosphate + diphosphate = orotate + 5-phospho-alpha-D-ribose 1-diphosphate. Its pathway is pyrimidine metabolism; UMP biosynthesis via de novo pathway; UMP from orotate: step 1/2. Catalyzes the transfer of a ribosyl phosphate group from 5-phosphoribose 1-diphosphate to orotate, leading to the formation of orotidine monophosphate (OMP). The chain is Orotate phosphoribosyltransferase from Helicobacter pylori (strain P12).